The primary structure comprises 437 residues: UDP-N-acetylmuramate--L-alanine ligase (437 aa).

114 to 120 (GTHGKTS) lines the ATP pocket.

It belongs to the MurCDEF family.

It is found in the cytoplasm. It carries out the reaction UDP-N-acetyl-alpha-D-muramate + L-alanine + ATP = UDP-N-acetyl-alpha-D-muramoyl-L-alanine + ADP + phosphate + H(+). Its pathway is cell wall biogenesis; peptidoglycan biosynthesis. Its function is as follows. Cell wall formation. This Lactobacillus helveticus (strain DPC 4571) protein is UDP-N-acetylmuramate--L-alanine ligase.